The sequence spans 545 residues: CTP synthase (545 aa).

Residues 1–266 (MTTNYIFVTG…DDYICKRFSL (266 aa)) are amidoligase domain. S14 is a binding site for CTP. Residue S14 participates in UTP binding. ATP contacts are provided by residues 15–20 (SLGKGI) and D72. D72 and E140 together coordinate Mg(2+). Residues 147–149 (DIE), 187–192 (KTKPTQ), and K223 each bind CTP. Residues 187–192 (KTKPTQ) and K223 each bind UTP. 239-241 (KDV) is an ATP binding site. In terms of domain architecture, Glutamine amidotransferase type-1 spans 291-542 (TIGMVGKYIE…VKAASEYQKR (252 aa)). Position 352 (G352) interacts with L-glutamine. The Nucleophile; for glutamine hydrolysis role is filled by C379. L-glutamine-binding positions include 380 to 383 (LGMQ), E403, and R470. Residues H515 and E517 contribute to the active site.

Belongs to the CTP synthase family. In terms of assembly, homotetramer.

It carries out the reaction UTP + L-glutamine + ATP + H2O = CTP + L-glutamate + ADP + phosphate + 2 H(+). The catalysed reaction is L-glutamine + H2O = L-glutamate + NH4(+). It catalyses the reaction UTP + NH4(+) + ATP = CTP + ADP + phosphate + 2 H(+). The protein operates within pyrimidine metabolism; CTP biosynthesis via de novo pathway; CTP from UDP: step 2/2. Allosterically activated by GTP, when glutamine is the substrate; GTP has no effect on the reaction when ammonia is the substrate. The allosteric effector GTP functions by stabilizing the protein conformation that binds the tetrahedral intermediate(s) formed during glutamine hydrolysis. Inhibited by the product CTP, via allosteric rather than competitive inhibition. Catalyzes the ATP-dependent amination of UTP to CTP with either L-glutamine or ammonia as the source of nitrogen. Regulates intracellular CTP levels through interactions with the four ribonucleotide triphosphates. This chain is CTP synthase, found in Cronobacter sakazakii (strain ATCC BAA-894) (Enterobacter sakazakii).